The sequence spans 278 residues: Ribosomal RNA small subunit methyltransferase J (278 aa).

Residues 143 to 144 and Asp-197 each bind S-adenosyl-L-methionine; that span reads ER.

Belongs to the methyltransferase superfamily. RsmJ family.

The protein resides in the cytoplasm. It carries out the reaction guanosine(1516) in 16S rRNA + S-adenosyl-L-methionine = N(2)-methylguanosine(1516) in 16S rRNA + S-adenosyl-L-homocysteine + H(+). Functionally, specifically methylates the guanosine in position 1516 of 16S rRNA. This Marinobacter nauticus (strain ATCC 700491 / DSM 11845 / VT8) (Marinobacter aquaeolei) protein is Ribosomal RNA small subunit methyltransferase J.